The primary structure comprises 69 residues: Amphipathic peptide OcyC2 (69 aa).

The N-terminal stretch at 1 to 23 (MKTQFAILMIAVVLMQMLVQTEG) is a signal peptide. At I37 the chain carries Isoleucine amide. A propeptide spanning residues 41–69 (GLKKLDQLDDTFDSDLSDADVKLLREMFK) is cleaved from the precursor.

This sequence belongs to the non-disulfide-bridged peptide (NDBP) superfamily. Short antimicrobial peptide (group 4) family. As to expression, expressed by the venom gland.

Its subcellular location is the secreted. The protein resides in the target cell membrane. Functionally, amphipathic peptide with antimicrobial activity. Shows antifungal activity with MIC values ranging from 25 to 200 uM. Does not show antifungal activity against Candida glabrata (ATCC90030) and Candida parapsilosis (ATCC22019) (MIC&gt;400 uM). This Opisthacanthus cayaporum (South American scorpion) protein is Amphipathic peptide OcyC2.